The following is a 39-amino-acid chain: Colipase (39 aa).

Disulfide bonds link C16-C27 and C22-C38.

This sequence belongs to the colipase family. In terms of assembly, forms a 1:1 stoichiometric complex with pancreatic lipase. As to expression, expressed by the pancreas.

It localises to the secreted. Functionally, colipase is a cofactor of pancreatic lipase. It allows the lipase to anchor itself to the lipid-water interface. Without colipase the enzyme is washed off by bile salts, which have an inhibitory effect on the lipase. The protein is Colipase of Squalus acanthias (Spiny dogfish).